A 475-amino-acid polypeptide reads, in one-letter code: Trifunctional enzyme subunit beta, mitochondrial (475 aa).

Residues 1–34 (MTTILTYPFKNLPTASKWALRFSIRPLSCSSQLR) constitute a mitochondrion transit peptide. An N6-acetyllysine; alternate modification is found at lysine 73. An N6-succinyllysine; alternate modification is found at lysine 73. The active-site Acyl-thioester intermediate is the cysteine 139. The stretch at 174–221 (IRHSRKMRKLMLDLNKAKSMGQRLSLISKFRFNFLAPELPAVSEFSTS) is an intramembrane region. Lysine 189 carries the N6-acetyllysine; alternate modification. An N6-succinyllysine; alternate modification is found at lysine 189. Residues lysine 191, lysine 273, and lysine 292 each carry the N6-succinyllysine modification. Residue lysine 294 is modified to N6-acetyllysine; alternate. N6-succinyllysine; alternate is present on lysine 294. Lysine 299 is subject to N6-acetyllysine. Position 333 is an N6-acetyllysine; alternate (lysine 333). N6-succinyllysine; alternate is present on lysine 333. An N6-acetyllysine mark is found at lysine 349 and lysine 362. Cysteine 459 serves as the catalytic Proton donor/acceptor.

This sequence belongs to the thiolase-like superfamily. Thiolase family. As to quaternary structure, heterotetramer of 2 alpha/HADHA and 2 beta/HADHB subunits; forms the mitochondrial trifunctional enzyme. Also purified as higher order heterooligomers including a 4 alpha/HADHA and 4 beta/HADHB heterooligomer which physiological significance remains unclear. The mitochondrial trifunctional enzyme interacts with MTLN. Interacts with RSAD2/viperin.

Its subcellular location is the mitochondrion. The protein localises to the mitochondrion inner membrane. The protein resides in the mitochondrion outer membrane. It is found in the endoplasmic reticulum. The catalysed reaction is an acyl-CoA + acetyl-CoA = a 3-oxoacyl-CoA + CoA. It catalyses the reaction butanoyl-CoA + acetyl-CoA = 3-oxohexanoyl-CoA + CoA. It carries out the reaction hexanoyl-CoA + acetyl-CoA = 3-oxooctanoyl-CoA + CoA. The enzyme catalyses octanoyl-CoA + acetyl-CoA = 3-oxodecanoyl-CoA + CoA. The catalysed reaction is decanoyl-CoA + acetyl-CoA = 3-oxododecanoyl-CoA + CoA. It catalyses the reaction dodecanoyl-CoA + acetyl-CoA = 3-oxotetradecanoyl-CoA + CoA. It carries out the reaction tetradecanoyl-CoA + acetyl-CoA = 3-oxohexadecanoyl-CoA + CoA. Its pathway is lipid metabolism; fatty acid beta-oxidation. Its function is as follows. Mitochondrial trifunctional enzyme catalyzes the last three of the four reactions of the mitochondrial beta-oxidation pathway. The mitochondrial beta-oxidation pathway is the major energy-producing process in tissues and is performed through four consecutive reactions breaking down fatty acids into acetyl-CoA. Among the enzymes involved in this pathway, the trifunctional enzyme exhibits specificity for long-chain fatty acids. Mitochondrial trifunctional enzyme is a heterotetrameric complex composed of two proteins, the trifunctional enzyme subunit alpha/HADHA carries the 2,3-enoyl-CoA hydratase and the 3-hydroxyacyl-CoA dehydrogenase activities, while the trifunctional enzyme subunit beta/HADHB described here bears the 3-ketoacyl-CoA thiolase activity. The polypeptide is Trifunctional enzyme subunit beta, mitochondrial (HADHB) (Pan troglodytes (Chimpanzee)).